The primary structure comprises 606 residues: Isocitrate dehydrogenase kinase/phosphatase (606 aa).

Residues 354–360 (APGFKGT) and Lys375 each bind ATP. Asp414 is an active-site residue.

This sequence belongs to the AceK family.

It is found in the cytoplasm. It catalyses the reaction L-seryl-[isocitrate dehydrogenase] + ATP = O-phospho-L-seryl-[isocitrate dehydrogenase] + ADP + H(+). In terms of biological role, bifunctional enzyme which can phosphorylate or dephosphorylate isocitrate dehydrogenase (IDH) on a specific serine residue. This is a regulatory mechanism which enables bacteria to bypass the Krebs cycle via the glyoxylate shunt in response to the source of carbon. When bacteria are grown on glucose, IDH is fully active and unphosphorylated, but when grown on acetate or ethanol, the activity of IDH declines drastically concomitant with its phosphorylation. In Rhodopseudomonas palustris (strain BisB5), this protein is Isocitrate dehydrogenase kinase/phosphatase.